The primary structure comprises 95 residues: Large ribosomal subunit protein bL28 (95 aa).

This sequence belongs to the bacterial ribosomal protein bL28 family.

In Dinoroseobacter shibae (strain DSM 16493 / NCIMB 14021 / DFL 12), this protein is Large ribosomal subunit protein bL28.